A 209-amino-acid chain; its full sequence is Imidazoleglycerol-phosphate dehydratase (209 aa).

It belongs to the imidazoleglycerol-phosphate dehydratase family.

It is found in the cytoplasm. The enzyme catalyses D-erythro-1-(imidazol-4-yl)glycerol 3-phosphate = 3-(imidazol-4-yl)-2-oxopropyl phosphate + H2O. It participates in amino-acid biosynthesis; L-histidine biosynthesis; L-histidine from 5-phospho-alpha-D-ribose 1-diphosphate: step 6/9. The polypeptide is Imidazoleglycerol-phosphate dehydratase (Prochlorococcus marinus (strain MIT 9313)).